The chain runs to 161 residues: Peroxynitrite isomerase 2 (161 aa).

The GXWXGXG signature appears at 17 to 23 (GTWTGRG). H152 is a heme b binding site.

The protein belongs to the nitrobindin family. As to quaternary structure, homodimer. Requires heme b as cofactor.

The enzyme catalyses peroxynitrite = nitrate. Its pathway is nitrogen metabolism. Its function is as follows. Heme-binding protein able to scavenge peroxynitrite and to protect free L-tyrosine against peroxynitrite-mediated nitration, by acting as a peroxynitrite isomerase that converts peroxynitrite to nitrate. Therefore, this protein likely plays a role in peroxynitrite sensing and in the detoxification of reactive nitrogen and oxygen species (RNS and ROS, respectively). Is able to bind nitric oxide (NO) in vitro, but may act as a sensor of peroxynitrite levels in vivo. In Mycobacterium avium (strain 104), this protein is Peroxynitrite isomerase 2.